Consider the following 191-residue polypeptide: Elongation factor P (191 aa).

The protein belongs to the elongation factor P family.

The protein resides in the cytoplasm. It participates in protein biosynthesis; polypeptide chain elongation. Involved in peptide bond synthesis. Stimulates efficient translation and peptide-bond synthesis on native or reconstituted 70S ribosomes in vitro. Probably functions indirectly by altering the affinity of the ribosome for aminoacyl-tRNA, thus increasing their reactivity as acceptors for peptidyl transferase. This is Elongation factor P from Ralstonia pickettii (strain 12J).